Consider the following 591-residue polypeptide: Peroxisome assembly protein 2 (591 aa).

Positions 1–78 (MSDSDPKPTA…TNIDTNNNTN (78 aa)) are disordered. The Peroxisomal matrix segment spans residues 1 to 148 (MSDSDPKPTA…TSREGTRPAF (148 aa)). The span at 7-26 (KPTAAKGAAPTSIPNSTRNP) shows a compositional bias: low complexity. Over residues 27 to 54 (NPTPPNPNPNPNPISTPAPTPTATPSPP) the composition is skewed to pro residues. The segment covering 55 to 78 (IASSSNNGNNSTRSTNIDTNNNTN) has biased composition (low complexity). The helical transmembrane segment at 149-175 (RVGQVDAELLDEELVELLRGQVREALR) threads the bilayer. The Cytoplasmic segment spans residues 176–196 (YVGGGGGGGGGGGGGGVGSGV). Residues 197–222 (AQDWEAEISLALRAVLFKLTVWDHDA) form a helical membrane-spanning segment. At 223-246 (TYGAALQNLKYTDARRDGPALAPP) the chain is on the peroxisomal matrix side. A helical membrane pass occupies residues 247-273 (SRWQKALYGLVTVGGRYLWAKWEDWLL). Topologically, residues 274–283 (EQDDGFEGPS) are cytoplasmic. Residues 284–314 (PRVKRLARWTSALSTLHASAALVSFLVFLLH) traverse the membrane as a helical segment. The Peroxisomal matrix segment spans residues 315–341 (GRYRTLLDRLLRMRLAPPTSQVSREVS). Residues 342-365 (FEYLNRQLVWHAFTEFLLFVLPLV) form a helical membrane-spanning segment. The Cytoplasmic segment spans residues 366–591 (GINRWRRWLA…EDGLDEDPES (226 aa)). Cysteine 408, cysteine 411, cysteine 449, cysteine 451, cysteine 454, cysteine 457, cysteine 472, and cysteine 475 together coordinate Zn(2+). The RING-type; atypical zinc-finger motif lies at 408–475 (CAICYRDQNS…EGEGWPCLRC (68 aa)). The tract at residues 512–591 (KAPSDHEEEE…EDGLDEDPES (80 aa)) is disordered. 2 stretches are compositionally biased toward acidic residues: residues 517-537 (HEEE…ENEG) and 575-591 (SEDY…DPES).

It belongs to the pex2/pex10/pex12 family. In terms of assembly, component of the PEX2-PEX10-PEX12 retrotranslocation channel, composed of PEX2, PEX10 and PEX12.

It is found in the peroxisome membrane. It carries out the reaction [E2 ubiquitin-conjugating enzyme]-S-ubiquitinyl-L-cysteine + [acceptor protein]-L-cysteine = [E2 ubiquitin-conjugating enzyme]-L-cysteine + [acceptor protein]-S-ubiquitinyl-L-cysteine.. It functions in the pathway protein modification; protein ubiquitination. In terms of biological role, E3 ubiquitin-protein ligase component of a retrotranslocation channel required for peroxisome organization by mediating export of the PEX5 receptor from peroxisomes to the cytosol, thereby promoting PEX5 recycling. The retrotranslocation channel is composed of PEX2, PEX10 and PEX12; each subunit contributing transmembrane segments that coassemble into an open channel that specifically allows the passage of PEX5 through the peroxisomal membrane. PEX2 also regulates peroxisome organization by acting as a E3 ubiquitin-protein ligase. PEX2 ubiquitinates PEX5 during its passage through the retrotranslocation channel: catalyzes monoubiquitination of PEX5 at 'Cys-6', a modification that acts as a signal for PEX5 extraction into the cytosol. The protein is Peroxisome assembly protein 2 of Thermothelomyces thermophilus (strain ATCC 42464 / BCRC 31852 / DSM 1799) (Sporotrichum thermophile).